We begin with the raw amino-acid sequence, 330 residues long: Polygalacturonase inhibitor 1 (330 aa).

A signal peptide spans 1–21 (MDKTATLCLLFLFTFLTTCLS). 2 disulfide bridges follow: Cys-25–Cys-55 and Cys-56–Cys-63. 10 LRR repeats span residues 69–93 (NHRV…VGDL), 94–117 (PYLE…TIAK), 118–142 (LKNL…ISQL), 143–166 (KNLE…LSTL), 167–189 (PKIL…SFGS), 191–215 (PGTV…LGNI), 217–237 (FNRI…LFGS), 238–260 (NKTT…KVDI), 261–285 (PKTL…WTEA), and 287–309 (LQFF…KLQT). Asn-106 and Asn-130 each carry an N-linked (GlcNAc...) asparagine glycan. Residue Asn-238 is glycosylated (N-linked (GlcNAc...) asparagine). Asn-291 carries N-linked (GlcNAc...) asparagine glycosylation. 2 disulfides stabilise this stretch: Cys-298/Cys-320 and Cys-322/Cys-329.

This sequence belongs to the polygalacturonase-inhibiting protein family.

The protein localises to the secreted. It is found in the cell wall. The protein resides in the membrane. Functionally, inhibitor of fungal polygalacturonase. It is an important factor for plant resistance to phytopathogenic fungi. The protein is Polygalacturonase inhibitor 1 (PGIP1) of Arabidopsis thaliana (Mouse-ear cress).